Here is a 261-residue protein sequence, read N- to C-terminus: Cytochrome c oxidase subunit 3 (261 aa).

The Mitochondrial matrix segment spans residues 1–15 (MTHQTHAYHMVNPSP). The chain crosses the membrane as a helical span at residues 16-34 (WPLTGALSALLMTSGLTMW). Residues 35–40 (FHFNSM) are Mitochondrial intermembrane-facing. Residues 41-66 (LLLSLGLLTNTLTMYQWWRDIIREST) traverse the membrane as a helical segment. Residues 67-72 (FQGHHT) are Mitochondrial matrix-facing. A helical membrane pass occupies residues 73 to 105 (SVVQKGLRYGMILFIISEVLFFTGFFWAFYHSS). The Mitochondrial intermembrane portion of the chain corresponds to 106–128 (LAPTPELGGCWPPTGIHPLNPLE). The chain crosses the membrane as a helical span at residues 129–152 (VPLLNTSILLASGVSITWAHHSLM). Residues 153-155 (EGD) lie on the Mitochondrial matrix side of the membrane. A helical transmembrane segment spans residues 156-183 (RKHMIQALSITIALGVYFTLLQASEYYE). Residues 184 to 190 (APFTISD) lie on the Mitochondrial intermembrane side of the membrane. A helical membrane pass occupies residues 191–223 (GVYGSTFFVATGFHGLHVIIGSTFLAVCLLRQL). Over 224–232 (KFHFTSNHH) the chain is Mitochondrial matrix. Residues 233–256 (FGFEAAAWYWHFVDVVWLFLYVSI) traverse the membrane as a helical segment. Residues 257–261 (YWWGS) are Mitochondrial intermembrane-facing.

Belongs to the cytochrome c oxidase subunit 3 family. As to quaternary structure, component of the cytochrome c oxidase (complex IV, CIV), a multisubunit enzyme composed of 14 subunits. The complex is composed of a catalytic core of 3 subunits MT-CO1, MT-CO2 and MT-CO3, encoded in the mitochondrial DNA, and 11 supernumerary subunits COX4I, COX5A, COX5B, COX6A, COX6B, COX6C, COX7A, COX7B, COX7C, COX8 and NDUFA4, which are encoded in the nuclear genome. The complex exists as a monomer or a dimer and forms supercomplexes (SCs) in the inner mitochondrial membrane with NADH-ubiquinone oxidoreductase (complex I, CI) and ubiquinol-cytochrome c oxidoreductase (cytochrome b-c1 complex, complex III, CIII), resulting in different assemblies (supercomplex SCI(1)III(2)IV(1) and megacomplex MCI(2)III(2)IV(2)).

The protein localises to the mitochondrion inner membrane. It catalyses the reaction 4 Fe(II)-[cytochrome c] + O2 + 8 H(+)(in) = 4 Fe(III)-[cytochrome c] + 2 H2O + 4 H(+)(out). Functionally, component of the cytochrome c oxidase, the last enzyme in the mitochondrial electron transport chain which drives oxidative phosphorylation. The respiratory chain contains 3 multisubunit complexes succinate dehydrogenase (complex II, CII), ubiquinol-cytochrome c oxidoreductase (cytochrome b-c1 complex, complex III, CIII) and cytochrome c oxidase (complex IV, CIV), that cooperate to transfer electrons derived from NADH and succinate to molecular oxygen, creating an electrochemical gradient over the inner membrane that drives transmembrane transport and the ATP synthase. Cytochrome c oxidase is the component of the respiratory chain that catalyzes the reduction of oxygen to water. Electrons originating from reduced cytochrome c in the intermembrane space (IMS) are transferred via the dinuclear copper A center (CU(A)) of subunit 2 and heme A of subunit 1 to the active site in subunit 1, a binuclear center (BNC) formed by heme A3 and copper B (CU(B)). The BNC reduces molecular oxygen to 2 water molecules using 4 electrons from cytochrome c in the IMS and 4 protons from the mitochondrial matrix. The polypeptide is Cytochrome c oxidase subunit 3 (MT-CO3) (Sus scrofa (Pig)).